A 234-amino-acid chain; its full sequence is Large ribosomal subunit protein uL1 (234 aa).

It belongs to the universal ribosomal protein uL1 family. In terms of assembly, part of the 50S ribosomal subunit.

Functionally, binds directly to 23S rRNA. The L1 stalk is quite mobile in the ribosome, and is involved in E site tRNA release. Its function is as follows. Protein L1 is also a translational repressor protein, it controls the translation of the L11 operon by binding to its mRNA. This Aliivibrio salmonicida (strain LFI1238) (Vibrio salmonicida (strain LFI1238)) protein is Large ribosomal subunit protein uL1.